A 247-amino-acid chain; its full sequence is Probable transcriptional regulatory protein Dvul_0986 (247 aa).

The segment at 1–22 is disordered; the sequence is MAGHSKWANIQHRKGRQDAKRG.

Belongs to the TACO1 family.

Its subcellular location is the cytoplasm. This is Probable transcriptional regulatory protein Dvul_0986 from Nitratidesulfovibrio vulgaris (strain DP4) (Desulfovibrio vulgaris).